Consider the following 109-residue polypeptide: Nucleoid-associated protein Caul_4574 (109 aa).

It belongs to the YbaB/EbfC family. Homodimer.

It localises to the cytoplasm. Its subcellular location is the nucleoid. Its function is as follows. Binds to DNA and alters its conformation. May be involved in regulation of gene expression, nucleoid organization and DNA protection. The polypeptide is Nucleoid-associated protein Caul_4574 (Caulobacter sp. (strain K31)).